We begin with the raw amino-acid sequence, 93 residues long: Acylphosphatase (93 aa).

In terms of domain architecture, Acylphosphatase-like spans 5 to 93; that stretch reads TAILRVTGFV…EDRKTFDIVY (89 aa). Active-site residues include arginine 20 and asparagine 38.

The protein belongs to the acylphosphatase family.

It carries out the reaction an acyl phosphate + H2O = a carboxylate + phosphate + H(+). The chain is Acylphosphatase (acyP) from Listeria welshimeri serovar 6b (strain ATCC 35897 / DSM 20650 / CCUG 15529 / CIP 8149 / NCTC 11857 / SLCC 5334 / V8).